The following is a 147-amino-acid chain: Large ribosomal subunit protein uL15 (147 aa).

Residues 1–28 show a composition bias toward basic residues; that stretch reads MIRRRKKVRKLRGSHTHGWGCKKKHRGG. The segment at 1 to 43 is disordered; that stretch reads MIRRRKKVRKLRGSHTHGWGCKKKHRGGGSKGGRGMAGTGKRN. Residues 29–38 show a composition bias toward gly residues; that stretch reads GSKGGRGMAG.

Belongs to the universal ribosomal protein uL15 family. Part of the 50S ribosomal subunit.

Its function is as follows. Binds to the 23S rRNA. This is Large ribosomal subunit protein uL15 from Pyrococcus horikoshii (strain ATCC 700860 / DSM 12428 / JCM 9974 / NBRC 100139 / OT-3).